A 478-amino-acid polypeptide reads, in one-letter code: tRNA modification GTPase MnmE (478 aa).

(6S)-5-formyl-5,6,7,8-tetrahydrofolate contacts are provided by arginine 25, glutamate 82, and lysine 135. In terms of domain architecture, TrmE-type G spans glycine 231–glycine 400. Residue asparagine 241 participates in K(+) binding. GTP contacts are provided by residues asparagine 241–serine 246, threonine 260–threonine 266, and aspartate 285–glycine 288. Serine 245 lines the Mg(2+) pocket. Residues threonine 260, valine 262, and threonine 265 each coordinate K(+). Threonine 266 contacts Mg(2+). Lysine 478 is a binding site for (6S)-5-formyl-5,6,7,8-tetrahydrofolate.

This sequence belongs to the TRAFAC class TrmE-Era-EngA-EngB-Septin-like GTPase superfamily. TrmE GTPase family. In terms of assembly, homodimer. Heterotetramer of two MnmE and two MnmG subunits. K(+) is required as a cofactor.

It is found in the cytoplasm. Its function is as follows. Exhibits a very high intrinsic GTPase hydrolysis rate. Involved in the addition of a carboxymethylaminomethyl (cmnm) group at the wobble position (U34) of certain tRNAs, forming tRNA-cmnm(5)s(2)U34. The sequence is that of tRNA modification GTPase MnmE from Polaromonas naphthalenivorans (strain CJ2).